Consider the following 827-residue polypeptide: MQDNSVNETKNIVEVGIDSSIEESYLAYSMSVIIGRALPDARDGLKPVHRRILYAMHELGLTSKVAYKKSARIVGDVIGKYHPHGDNAVYDALVRMAQDFSMRLELVDGQGNFGSIDGDNAAAMRYTEARMTKASEEILRDIDKDTIDFVPNYDDTLKEPDILPSRLPNLLVNGANGIAVGMATSIPPHRMDEIIDALVHVLENPNAGLDEILEFVKGPDFPTGGIIYGKAGIIEAYKTGRGRVKVRAKVHVEKTKNKEIIVLDEMPFQTNKAKLVEQISDLAREKQIEGISEVRDESDREGIRVVIELKRDAMSEIVLNHLYKLTTMETTFSIILLAIYNKEPKIFTLLELLHLFLNHRKTIIIRRTIFELEKAKARAHILEGYLIALDNIDEIVRLIKTSQSPEAAKNALMERFTLSEIQSKAILEMRLQRLTGLERDKIKEEYQNLLELIDDLNGILKSEDRLNGVVKTELLEVKEQFSSPRRTEIQESYENIDIEDLIANEPMVVSMSYKGYVKRVDLKAYEKQNRGGKGKLSGSTYEDDFIENFFVANTHDILLFITNKGQLYHLKVYKIPEASRIAMGKAIVNLISLAPDEKIMATLSTKDFSDERSLAFFTKNGVVKRTNLSEFESNRSCGIRAIVLDEGDELVSAKVVDKNAKHLLIASHLGIFIKFPLEEVREIGRTTRGVIGIKLNENDFVVGAVVISDDGNKLLSVSENGLGKQTLAEAYRGQSRGGKGVIGMKLTQKTGNLVGVISVDDENLDLMILTASAKMIRVSIKDIRETGRNASGVKLINTADKVMYVNSCPKEEEPENLETSSAQNLFE.

Positions 38-501 (LPDARDGLKP…SYENIDIEDL (464 aa)) constitute a Topo IIA-type catalytic domain. Y126 serves as the catalytic O-(5'-phospho-DNA)-tyrosine intermediate. Residues 528 to 534 (QNRGGKG) carry the GyrA-box motif.

The protein belongs to the type II topoisomerase GyrA/ParC subunit family. In terms of assembly, heterotetramer, composed of two GyrA and two GyrB chains. In the heterotetramer, GyrA contains the active site tyrosine that forms a transient covalent intermediate with DNA, while GyrB binds cofactors and catalyzes ATP hydrolysis.

It localises to the cytoplasm. The enzyme catalyses ATP-dependent breakage, passage and rejoining of double-stranded DNA.. Functionally, a type II topoisomerase that negatively supercoils closed circular double-stranded (ds) DNA in an ATP-dependent manner to modulate DNA topology and maintain chromosomes in an underwound state. Negative supercoiling favors strand separation, and DNA replication, transcription, recombination and repair, all of which involve strand separation. Also able to catalyze the interconversion of other topological isomers of dsDNA rings, including catenanes and knotted rings. Type II topoisomerases break and join 2 DNA strands simultaneously in an ATP-dependent manner. In Helicobacter pylori (strain ATCC 700392 / 26695) (Campylobacter pylori), this protein is DNA gyrase subunit A.